The chain runs to 1059 residues: Ceruloplasmin (1059 aa).

An N-terminal signal peptide occupies residues 1–19; the sequence is MKFLLLSALLFLHSSLAWT. Plastocyanin-like domains are found at residues 20–199, 208–356, 369–554, 564–712, 724–894, and 902–1055; these read REKH…LILC, KEEN…VRDC, HVRH…MKIC, RQKD…VNQC, GERT…LIVC, and FNPK…PNQE. Na(+) is bound by residues tyrosine 55, glycine 64, and tyrosine 67. Residues histidine 120 and histidine 122 each contribute to the Cu(2+) site. Residue histidine 120 coordinates O2. Lysine 128 is a binding site for Ca(2+). Asparagine 138 carries an N-linked (GlcNAc...) asparagine glycan. The Ca(2+) site is built by glutamine 143, aspartate 146, and aspartate 147. A disulfide bond links cysteine 173 and cysteine 199. Cu(2+) is bound by residues histidine 179 and histidine 181. Histidine 179 lines the O2 pocket. Asparagine 226 is a glycosylation site (N-linked (GlcNAc...) asparagine). Serine 255 serves as a coordination point for Na(+). Cysteine 275 and cysteine 356 are disulfide-bonded. Residues histidine 294, cysteine 337, and histidine 342 each contribute to the Cu(2+) site. An N-linked (GlcNAc...) asparagine glycan is attached at asparagine 396. Na(+) is bound by residues phenylalanine 407, glycine 416, and tyrosine 419. Cysteine 528 and cysteine 554 form a disulfide bridge. The N-linked (GlcNAc...) asparagine glycan is linked to asparagine 582. Serine 611 lines the Na(+) pocket. The cysteines at positions 631 and 712 are disulfide-linked. Residues histidine 650, cysteine 693, histidine 698, and methionine 703 each coordinate Cu(2+). Cysteine 693 serves as the catalytic Nucleophile; for glutathione peroxidase activity. A glycan (N-linked (GlcNAc...) asparagine) is linked at asparagine 756. Na(+) contacts are provided by phenylalanine 761, glycine 770, and tyrosine 773. Cysteines 868 and 894 form a disulfide. N-linked (GlcNAc...) asparagine glycosylation occurs at asparagine 920. Residue serine 949 coordinates Na(+). Cu(2+)-binding residues include histidine 988, histidine 991, histidine 993, histidine 1033, cysteine 1034, histidine 1035, histidine 1039, and methionine 1044. O2 is bound by residues histidine 991 and histidine 993. Residue histidine 1035 participates in O2 binding.

It belongs to the multicopper oxidase family. Found in a complex with MPO and LTF; interacts directly with MPO and LTF, which allows Fe(3+) incorporation into LTF, activation of CP ferroxidase activity and protection of CP antioxidant properties by MPO. Cu(2+) serves as cofactor. In terms of tissue distribution, synthesized in liver and secreted into the plasma. Also choroid plexus, yolk sac, placenta, and testis; not in stomach and small intestine. Fetal lung and liver.

The protein resides in the secreted. It carries out the reaction 4 Fe(2+) + O2 + 4 H(+) = 4 Fe(3+) + 2 H2O. The catalysed reaction is 4 Cu(+) + O2 + 4 H(+) = 4 Cu(2+) + 2 H2O. The enzyme catalyses a hydroperoxide + 2 glutathione = an alcohol + glutathione disulfide + H2O. It catalyses the reaction 4 nitric oxide + O2 + 2 H2O = 4 nitrite + 4 H(+). It carries out the reaction 2 glutathione + H2O2 = glutathione disulfide + 2 H2O. Its function is as follows. Multifunctional blue, copper-binding (6-7 atoms per molecule) glycoprotein. It has ferroxidase activity oxidizing Fe(2+) to Fe(3+) without releasing radical oxygen species. It is involved in iron transport across the cell membrane. Copper ions provide a large number of enzymatic activites. Oxidizes highly toxic ferrous ions to the ferric state for further incorporation onto apo-transferrins, catalyzes Cu(+) oxidation and promotes the oxidation of biogenic amines such as norepinephrin and serotonin. Provides Cu(2+) ions for the ascorbate-mediated deaminase degradation of the heparan sulfate chains of GPC1. Has glutathione peroxidase-like activity, can remove both hydrogen peroxide and lipid hydroperoxide in the presence of thiols. Also shows NO-oxidase and NO2 synthase activities that determine endocrine NO homeostasis. The chain is Ceruloplasmin (Cp) from Rattus norvegicus (Rat).